A 269-amino-acid chain; its full sequence is uncharacterized protein (269 aa).

The next 8 helical transmembrane spans lie at 9–29 (YIIG…AHLF), 50–70 (FMLG…IVPL), 82–102 (FSII…VWAF), 107–127 (LYWT…MYGQ), 147–167 (LVFG…LHCT), 173–193 (VFSN…ILGF), 200–220 (LVSA…HLFA), and 224–244 (IFAF…FLLP).

Its subcellular location is the membrane. This is an uncharacterized protein from Schizosaccharomyces pombe (strain 972 / ATCC 24843) (Fission yeast).